A 908-amino-acid polypeptide reads, in one-letter code: DNA mismatch repair protein MutS (908 aa).

Residue 662-669 (GPNMGGKS) participates in ATP binding.

Belongs to the DNA mismatch repair MutS family.

In terms of biological role, this protein is involved in the repair of mismatches in DNA. It is possible that it carries out the mismatch recognition step. This protein has a weak ATPase activity. The sequence is that of DNA mismatch repair protein MutS from Rhizobium johnstonii (strain DSM 114642 / LMG 32736 / 3841) (Rhizobium leguminosarum bv. viciae).